A 357-amino-acid polypeptide reads, in one-letter code: Guanine nucleotide-binding protein alpha-1 subunit (357 aa).

Gly2 carries the N-myristoyl glycine lipid modification. A lipid anchor (S-palmitoyl cysteine) is attached at Cys4. Residues 32–357 form the G-alpha domain; that stretch reads NIIKLLLLGA…STKLKGCGLY (326 aa). Residues 35-48 are G1 motif; that stretch reads KLLLLGAGESGKST. GTP contacts are provided by Glu43, Ser44, Gly45, Lys46, Ser47, Thr48, Asp151, Leu176, Thr182, Gly204, Asn270, Lys271, Asp273, and Ala329. Position 47 (Ser47) interacts with Mg(2+). The tract at residues 174–182 is G2 motif; it reads DILHTRVPT. Residue Thr182 coordinates Mg(2+). The tract at residues 197-206 is G3 motif; the sequence is FRVFDVGGQR. The G4 motif stretch occupies residues 266–273; it reads ILFLNKID. Residues 327-332 are G5 motif; the sequence is TCATDT.

This sequence belongs to the G-alpha family. In terms of assembly, g proteins are composed of 3 units; alpha, beta and gamma. The alpha chain contains the guanine nucleotide binding site. Requires Mg(2+) as cofactor.

In terms of biological role, guanine nucleotide-binding proteins (G proteins) are involved as modulators or transducers in various transmembrane signaling systems. The polypeptide is Guanine nucleotide-binding protein alpha-1 subunit (gpa-1) (Caenorhabditis elegans).